A 436-amino-acid chain; its full sequence is Glutamate-1-semialdehyde 2,1-aminomutase (436 aa).

At Lys276 the chain carries N6-(pyridoxal phosphate)lysine.

Belongs to the class-III pyridoxal-phosphate-dependent aminotransferase family. HemL subfamily. As to quaternary structure, homodimer. Pyridoxal 5'-phosphate is required as a cofactor.

It is found in the cytoplasm. The enzyme catalyses (S)-4-amino-5-oxopentanoate = 5-aminolevulinate. Its pathway is porphyrin-containing compound metabolism; protoporphyrin-IX biosynthesis; 5-aminolevulinate from L-glutamyl-tRNA(Glu): step 2/2. It functions in the pathway porphyrin-containing compound metabolism; chlorophyll biosynthesis. The sequence is that of Glutamate-1-semialdehyde 2,1-aminomutase from Synechococcus sp. (strain JA-2-3B'a(2-13)) (Cyanobacteria bacterium Yellowstone B-Prime).